An 846-amino-acid chain; its full sequence is Iron-sulfur cluster assembly SufBD family protein Mb1496 (846 aa).

The disordered stretch occupies residues 1–20 (MTLTPEASKSVAQPPTQAPL). The 141-residue stretch at 388–528 (LAGYYLAEGH…LQSILARLGH (141 aa)) folds into the DOD-type homing endonuclease domain.

The protein belongs to the iron-sulfur cluster assembly SufBD family. This protein undergoes a protein self splicing that involves a post-translational excision of the intervening region (intein) followed by peptide ligation.

This is Iron-sulfur cluster assembly SufBD family protein Mb1496 from Mycobacterium bovis (strain ATCC BAA-935 / AF2122/97).